The following is a 173-amino-acid chain: Placenta-specific protein 1 (173 aa).

Positions 1–23 are cleaved as a signal peptide; the sequence is MNLRKFLGGTVLVAFMLFSYSEQ.

It belongs to the PLAC1 family. As to expression, expressed in placenta.

The protein resides in the secreted. May play a role in placental development. The polypeptide is Placenta-specific protein 1 (Mus musculus (Mouse)).